A 985-amino-acid chain; its full sequence is UPF0182 protein cgR_0895 (985 aa).

The next 7 helical transmembrane spans lie at 19–39, 63–83, 115–135, 176–196, 215–235, 262–282, and 290–310; these read VTWIFAIIALIILIAPMSVGF, IVLFVIFALIAGFVTWLAGYF, VMVLIPIFVALLAGLIGQRSW, SMMLIVAFLIALVGHYLMGGI, TQLAVTAGLWMLVKVAGYWLD, KIILLVIALFVAIAFFSAIFL, and LAVVLMLLSSVIIGAAWPLML. A disordered region spans residues 906–944; it reads AQDIEEVDGTTTTPSTDETDTDTDQPATETPTAPVSEAE. Low complexity predominate over residues 929-939; sequence DQPATETPTAP.

Belongs to the UPF0182 family.

The protein localises to the cell membrane. This chain is UPF0182 protein cgR_0895, found in Corynebacterium glutamicum (strain R).